The following is a 118-amino-acid chain: Large ribosomal subunit protein bL19 (118 aa).

It belongs to the bacterial ribosomal protein bL19 family.

Functionally, this protein is located at the 30S-50S ribosomal subunit interface and may play a role in the structure and function of the aminoacyl-tRNA binding site. This is Large ribosomal subunit protein bL19 from Campylobacter lari (strain RM2100 / D67 / ATCC BAA-1060).